The sequence spans 346 residues: Histone H1.8 (346 aa).

2 stretches are compositionally biased toward low complexity: residues 1–23 and 38–48; these read MAPGSVTSDISPSSTSTAGSSRS and PGGPSHSSLPV. Disordered regions lie at residues 1-50 and 121-346; these read MAPG…PVGR and ATGS…RAEA. Residues 51–129 enclose the H15 domain; it reads RHPPVLRMVL…GATGSFKLVP (79 aa). The span at 128–137 shows a compositional bias: basic residues; that stretch reads VPKHKKKIQP. Residues 148–167 are compositionally biased toward basic and acidic residues; it reads RAGEAKGKGPKKPSEAKEDP. A Nuclear localization signal motif is present at residues 164-179; the sequence is KEDPPNVGKVKKAAKR. Residues 172–182 show a composition bias toward basic residues; sequence KVKKAAKRPAK. 2 stretches are compositionally biased toward basic and acidic residues: residues 205–225 and 251–262; these read KDTRAQSGEARKVPPKPDKAM and EAYRKTKAESKS. A compositionally biased stretch (basic residues) spans 278–288; that stretch reads TKKKVVAKAKA. Residues 298-309 show a composition bias toward low complexity; it reads KAAAPAKGSGSK. Over residues 334–346 the composition is skewed to polar residues; that stretch reads ASSSKVSSQRAEA.

This sequence belongs to the histone H1/H5 family. In terms of tissue distribution, oocyte-specific.

It localises to the cytoplasm. Its subcellular location is the nucleus. The protein resides in the chromosome. Functionally, may play a key role in the control of gene expression during oogenesis and early embryogenesis, presumably through the perturbation of chromatin structure. Essential for meiotic maturation of germinal vesicle-stage oocytes. The somatic type linker histone H1c is rapidly replaced by H1oo in a donor nucleus transplanted into an oocyte. The greater mobility of H1oo as compared to H1c may contribute to this rapid replacement and increased instability of the embryonic chromatin structure. The rapid replacement of H1c with H1oo may play an important role in nuclear remodeling. The polypeptide is Histone H1.8 (Homo sapiens (Human)).